Consider the following 344-residue polypeptide: Ubiquitin-associated domain-containing protein 2 (344 aa).

The N-terminal stretch at methionine 1–phenylalanine 34 is a signal peptide. Over glutamine 35–lysine 91 the chain is Extracellular. Residues phenylalanine 92–valine 111 form a helical membrane-spanning segment. Residues glutamate 112–asparagine 123 are Cytoplasmic-facing. The helical transmembrane segment at serine 124–cysteine 142 threads the bilayer. Over serine 143 to threonine 162 the chain is Extracellular. Residue asparagine 160 is glycosylated (N-linked (GlcNAc...) asparagine). Residues leucine 163–leucine 183 traverse the membrane as a helical segment. Residues serine 184–histidine 344 are Cytoplasmic-facing. The disordered stretch occupies residues arginine 284–glutamate 307. Residues asparagine 286–aspartate 296 show a composition bias toward basic and acidic residues. A UBA domain is found at glutamate 304–histidine 344.

The protein localises to the endoplasmic reticulum membrane. In terms of biological role, restricts trafficking of FAF2 from the endoplasmic reticulum to lipid droplets. May negatively regulate the canonical Wnt signaling pathway in the lymphocytes. In Gallus gallus (Chicken), this protein is Ubiquitin-associated domain-containing protein 2 (UBAC2).